Reading from the N-terminus, the 101-residue chain is Small ribosomal subunit protein uS14 (101 aa).

Belongs to the universal ribosomal protein uS14 family. Part of the 30S ribosomal subunit. Contacts proteins S3 and S10.

In terms of biological role, binds 16S rRNA, required for the assembly of 30S particles and may also be responsible for determining the conformation of the 16S rRNA at the A site. This is Small ribosomal subunit protein uS14 from Pseudomonas putida (strain W619).